The sequence spans 944 residues: E3 ubiquitin-protein ligase JMJ24 (944 aa).

Disordered stretches follow at residues 20–40 (QTRS…GIPD) and 77–103 (ANSA…YSEG). Residues 38–83 (IPDDLRCKRSDGKQWRCTAMSMADKTVCEKHYIQAKKRAANSAFRA) form the WRC domain. A Nuclear localization signal 1 motif is present at residues 73 to 80 (KKRAANSA). The PHD-type; atypical zinc-finger motif lies at 217 to 269 (GEICHQCQRKDRERIISCLKCNQRAFCHNCLSARYSEISLEEVEKVCPACRGL). Zn(2+) contacts are provided by Cys-220, Cys-223, Cys-234, Cys-237, Cys-243, Cys-246, Cys-263, and Cys-266. Positions 323–330 (EKRLREVE) match the Nuclear localization signal 2 motif. A JmjC domain is found at 621 to 873 (PRLGLLNVAA…ESARLAEEIR (253 aa)). Over residues 685-703 (ERVRKTKPVPEEPDQKMSE) the composition is skewed to basic and acidic residues. The disordered stretch occupies residues 685–715 (ERVRKTKPVPEEPDQKMSENESLLSPEQKLR).

It belongs to the JARID1 histone demethylase family. Homodimer. Interacts with RDR2. Binds to CMT3. Associates with the E2 ubiquitin-conjugating enzyme UBC10. In terms of processing, self-ubiquitinates. In terms of tissue distribution, expressed in inflorescences, flowers, roots, siliques, leaves and stems, especially in the vasculature (mainly phloem), with highest levels in floral organs.

The protein localises to the nucleus. The catalysed reaction is S-ubiquitinyl-[E2 ubiquitin-conjugating enzyme]-L-cysteine + [acceptor protein]-L-lysine = [E2 ubiquitin-conjugating enzyme]-L-cysteine + N(6)-ubiquitinyl-[acceptor protein]-L-lysine.. Its function is as follows. Binds histone H3 but seems to have lost demethylase activity probably due to its inability to bind iron Fe(2+). Possesses E3 ubiquitin ligase activity and targets directly CMT3 for proteasomal degradation to initiate destabilization of the heterochromatic state (e.g. CHG cytosine methylation and H3K9me2) of endogenous silenced loci. Required for the removal of repressive H3K9me2 histone marks to facilitate the transcription of AtSN1, AtMu1c, solo LTR and SDC, thus counteracting their transcriptional silencing. Mainly required to promote the basal level transcription of silenced loci such as TE and repeats targeted by RNA-dependent DNA methylation (RdDM) for silencing, a specialized branch of the RNA interference (RNAi) pathway. Also cooperates with RNAi pathways for gene silencing both by contributing to the production of 24-nt siRNA to initiate RdDM and by recruiting RDR2 to enable local transcripts to make dsRNA. Antagonizes histone H3K9 demethylase IBM1/JMJ25 function. In Arabidopsis thaliana (Mouse-ear cress), this protein is E3 ubiquitin-protein ligase JMJ24.